Here is a 318-residue protein sequence, read N- to C-terminus: Glutathione synthetase (318 aa).

In terms of domain architecture, ATP-grasp spans 133–317; that stretch reads KMYALQFTSV…LGQQVMAWLF (185 aa). Position 159-215 (159-215) interacts with ATP; that stretch reads VQQQGMAVLKPLGGKGGEGILFLQAGDRNLNSMIEISTQRGQLPVMLQEYLPAAKEG. 2 residues coordinate Mg(2+): Glu288 and Asn290.

This sequence belongs to the prokaryotic GSH synthase family. Mg(2+) serves as cofactor. Requires Mn(2+) as cofactor.

The enzyme catalyses gamma-L-glutamyl-L-cysteine + glycine + ATP = glutathione + ADP + phosphate + H(+). It functions in the pathway sulfur metabolism; glutathione biosynthesis; glutathione from L-cysteine and L-glutamate: step 2/2. The sequence is that of Glutathione synthetase from Thermosynechococcus vestitus (strain NIES-2133 / IAM M-273 / BP-1).